The following is a 462-amino-acid chain: General transcription factor IIH subunit 4 (462 aa).

Belongs to the TFB2 family. Component of the 7-subunit TFIIH core complex composed of XPB/ERCC3, XPD/ERCC2, GTF2H1, GTF2H2, GTF2H3, GTF2H4 and GTF2H5, which is active in NER. The core complex associates with the 3-subunit CDK-activating kinase (CAK) module composed of CCNH/cyclin H, CDK7 and MNAT1 to form the 10-subunit holoenzyme (holo-TFIIH) active in transcription. Part of TBP-based Pol II pre-initiation complex (PIC), in which Pol II core assembles with general transcription factors and other specific initiation factors including GTF2E1, GTF2E2, GTF2F1, GTF2F2, TCEA1, ERCC2, ERCC3, GTF2H2, GTF2H3, GTF2H4, GTF2H5, GTF2A1, GTF2A2, GTF2B and TBP; this large multi-subunit PIC complex mediates DNA unwinding and targets Pol II core to the transcription start site where the first phosphodiester bond forms.

The protein resides in the nucleus. In terms of biological role, component of the general transcription and DNA repair factor IIH (TFIIH) core complex, which is involved in general and transcription-coupled nucleotide excision repair (NER) of damaged DNA and, when complexed to CAK, in RNA transcription by RNA polymerase II. In NER, TFIIH acts by opening DNA around the lesion to allow the excision of the damaged oligonucleotide and its replacement by a new DNA fragment. In transcription, TFIIH has an essential role in transcription initiation. When the pre-initiation complex (PIC) has been established, TFIIH is required for promoter opening and promoter escape. Phosphorylation of the C-terminal tail (CTD) of the largest subunit of RNA polymerase II by the kinase module CAK controls the initiation of transcription. Stimulates the ATPase activity of TFIIH subunit XPB/ERCC3. This Homo sapiens (Human) protein is General transcription factor IIH subunit 4 (GTF2H4).